The chain runs to 275 residues: 2-dehydro-3-deoxyphosphooctonate aldolase (275 aa).

Belongs to the KdsA family.

The protein localises to the cytoplasm. It carries out the reaction D-arabinose 5-phosphate + phosphoenolpyruvate + H2O = 3-deoxy-alpha-D-manno-2-octulosonate-8-phosphate + phosphate. The protein operates within carbohydrate biosynthesis; 3-deoxy-D-manno-octulosonate biosynthesis; 3-deoxy-D-manno-octulosonate from D-ribulose 5-phosphate: step 2/3. It functions in the pathway bacterial outer membrane biogenesis; lipopolysaccharide biosynthesis. The chain is 2-dehydro-3-deoxyphosphooctonate aldolase from Francisella tularensis subsp. mediasiatica (strain FSC147).